A 978-amino-acid chain; its full sequence is Exocyst complex component 5 (978 aa).

The segment covering 1–11 (MSWARNIQSRI) has biased composition (polar residues). Disordered regions lie at residues 1-87 (MSWA…TTTQ) and 122-246 (TSPS…TTPY). Composition is skewed to low complexity over residues 36-52 (PSSP…TSLT) and 62-86 (SQPT…TTTT). Over residues 122 to 142 (TSPSMASPIGTSTGIQNPNAK) the composition is skewed to polar residues. Residues 143–245 (PSSLPSPSQS…QPTPIKQTTP (103 aa)) show a composition bias toward low complexity. The stretch at 303 to 325 (NTQLQLSQLESNIDRRLDDLAEE) forms a coiled coil.

Belongs to the SEC10 family. As to quaternary structure, the exocyst complex is composed of sec3/exoc1, sec5/exoc2, sec6/exoc3, sec8/exoc4, sec10/exoc5, sec15/exoc6, exo70/exoc7 and exo84/exoc8.

Its function is as follows. Component of the exocyst complex involved in the docking of exocytic vesicles with fusion sites on the plasma membrane. This chain is Exocyst complex component 5 (exoc5), found in Dictyostelium discoideum (Social amoeba).